Reading from the N-terminus, the 305-residue chain is MSEHTFARASHLSELEAESIHILRETVAEFANPVMLYSIGKDSQVLLHLARKAFHPAPLPFPLLHVDTTWKFRDMYAFRDAFVARHGLRLIIHRNQRALAEGINPFDHGSQKYTHAMKTQALLEALAAHGFDAAFGGARRDEEKSRAKERVFSFRDRHGQWDPRRQRPELWNLFNGRVDAGESMRVFPLSNWTELDVWHYVLRERIPVVPLYFAAERPVIDRGGTLLMVDDERMRLRPGEKPEIRRVRFRTLGCYPLSGAIESSATTVETVIHEMVNARQSERQGRLIDHDEEGSMELKKREGYF.

Belongs to the PAPS reductase family. CysD subfamily. As to quaternary structure, heterodimer composed of CysD, the smaller subunit, and CysN.

The enzyme catalyses sulfate + ATP + H(+) = adenosine 5'-phosphosulfate + diphosphate. It participates in sulfur metabolism; hydrogen sulfide biosynthesis; sulfite from sulfate: step 1/3. In terms of biological role, with CysN forms the ATP sulfurylase (ATPS) that catalyzes the adenylation of sulfate producing adenosine 5'-phosphosulfate (APS) and diphosphate, the first enzymatic step in sulfur assimilation pathway. APS synthesis involves the formation of a high-energy phosphoric-sulfuric acid anhydride bond driven by GTP hydrolysis by CysN coupled to ATP hydrolysis by CysD. The sequence is that of Sulfate adenylyltransferase subunit 2 from Myxococcus xanthus (strain DK1622).